A 284-amino-acid polypeptide reads, in one-letter code: 2-dehydro-3-deoxyphosphooctonate aldolase (284 aa).

It belongs to the KdsA family.

It is found in the cytoplasm. The catalysed reaction is D-arabinose 5-phosphate + phosphoenolpyruvate + H2O = 3-deoxy-alpha-D-manno-2-octulosonate-8-phosphate + phosphate. It functions in the pathway carbohydrate biosynthesis; 3-deoxy-D-manno-octulosonate biosynthesis; 3-deoxy-D-manno-octulosonate from D-ribulose 5-phosphate: step 2/3. The protein operates within bacterial outer membrane biogenesis; lipopolysaccharide biosynthesis. This chain is 2-dehydro-3-deoxyphosphooctonate aldolase, found in Mannheimia succiniciproducens (strain KCTC 0769BP / MBEL55E).